We begin with the raw amino-acid sequence, 394 residues long: Alanine racemase 2 (394 aa).

Lys-39 acts as the Proton acceptor; specific for D-alanine in catalysis. The residue at position 39 (Lys-39) is an N6-(pyridoxal phosphate)lysine. Residue Arg-139 coordinates substrate. The active-site Proton acceptor; specific for L-alanine is the Tyr-272. Met-320 serves as a coordination point for substrate.

It belongs to the alanine racemase family. Pyridoxal 5'-phosphate is required as a cofactor.

The catalysed reaction is L-alanine = D-alanine. It participates in amino-acid biosynthesis; D-alanine biosynthesis; D-alanine from L-alanine: step 1/1. Its function is as follows. Catalyzes the interconversion of L-alanine and D-alanine. May also act on other amino acids. This is Alanine racemase 2 (alr2) from Bacillus subtilis (strain 168).